Consider the following 328-residue polypeptide: Biotin synthase (328 aa).

The region spanning 48 to 277 is the Radical SAM core domain; the sequence is FVGNEVHLCS…GKRITVCGGR (230 aa). The [4Fe-4S] cluster site is built by Cys66, Cys70, and Cys73. [2Fe-2S] cluster contacts are provided by Ser142 and Cys202.

It belongs to the radical SAM superfamily. Biotin synthase family. In terms of assembly, homodimer. Requires [4Fe-4S] cluster as cofactor. The cofactor is [2Fe-2S] cluster.

The catalysed reaction is (4R,5S)-dethiobiotin + (sulfur carrier)-SH + 2 reduced [2Fe-2S]-[ferredoxin] + 2 S-adenosyl-L-methionine = (sulfur carrier)-H + biotin + 2 5'-deoxyadenosine + 2 L-methionine + 2 oxidized [2Fe-2S]-[ferredoxin]. The protein operates within cofactor biosynthesis; biotin biosynthesis; biotin from 7,8-diaminononanoate: step 2/2. Functionally, catalyzes the conversion of dethiobiotin (DTB) to biotin by the insertion of a sulfur atom into dethiobiotin via a radical-based mechanism. The protein is Biotin synthase of Citrifermentans bemidjiense (strain ATCC BAA-1014 / DSM 16622 / JCM 12645 / Bem) (Geobacter bemidjiensis).